A 77-amino-acid polypeptide reads, in one-letter code: Liver-expressed antimicrobial peptide 2 (77 aa).

Positions 1-22 are cleaved as a signal peptide; that stretch reads MWHLKLFAVLVICLLLAVQVHG. The propeptide occupies 23 to 37; that stretch reads SPIPELSSAKRRPRR. Disulfide bonds link cysteine 54–cysteine 65 and cysteine 60–cysteine 70.

It belongs to the LEAP2 family.

It localises to the secreted. Its function is as follows. Has an antimicrobial activity. This Sus scrofa (Pig) protein is Liver-expressed antimicrobial peptide 2 (LEAP2).